A 683-amino-acid chain; its full sequence is Sorting nexin MVP1 (683 aa).

Disordered regions lie at residues 1 to 25 and 246 to 276; these read MSRH…PTSP and LLAH…TRQE. The segment covering 248–257 has biased composition (polar residues); that stretch reads AHNQGSSTDT. Residues 302-418 enclose the PX domain; sequence PEDQVTVRLR…EVFFTEPRPI (117 aa). Residues Arg-338, Ser-340, Lys-364, and Arg-385 each contribute to the a 1,2-diacyl-sn-glycero-3-phospho-(1D-myo-inositol-3-phosphate) site.

It belongs to the sorting nexin family.

Its subcellular location is the cytoplasm. It is found in the membrane. Required for vacuolar protein sorting. This chain is Sorting nexin MVP1 (MVP1), found in Mycosarcoma maydis (Corn smut fungus).